Reading from the N-terminus, the 351-residue chain is Divinyl chlorophyll a/b light-harvesting protein PcbC (351 aa).

Transmembrane regions (helical) follow at residues 27 to 47, 81 to 101, 140 to 160, 202 to 222, 242 to 262, and 309 to 329; these read FIGS…GSTL, GVWT…FSAV, FILG…VEWA, VMSG…WHIA, AVLS…AFWC, and LSNV…WHAL.

It belongs to the PsbB/PsbC family. IsiA/Pcb subfamily. As to quaternary structure, the antenna complex consists of divinyl chlorophylls (a and b) and divinyl chlorophyll a/b binding proteins and binds more divinyl chlorophyll b than does the antenna complex from high-light-adapted Prochlorococcus. Divinyl chlorophyll a is required as a cofactor. Divinyl chlorophyll b serves as cofactor.

The protein localises to the cellular thylakoid membrane. Its function is as follows. The antenna complex functions as a light receptor, it captures and delivers excitation energy to photosystems II and I. The Prochlorales pcb genes are not related to higher plant LHCs. The sequence is that of Divinyl chlorophyll a/b light-harvesting protein PcbC (pcbC) from Prochlorococcus marinus (strain NATL2A).